A 315-amino-acid polypeptide reads, in one-letter code: Methionyl-tRNA formyltransferase (315 aa).

113–116 lines the (6S)-5,6,7,8-tetrahydrofolate pocket; it reads SLLP.

This sequence belongs to the Fmt family.

It catalyses the reaction L-methionyl-tRNA(fMet) + (6R)-10-formyltetrahydrofolate = N-formyl-L-methionyl-tRNA(fMet) + (6S)-5,6,7,8-tetrahydrofolate + H(+). Its function is as follows. Attaches a formyl group to the free amino group of methionyl-tRNA(fMet). The formyl group appears to play a dual role in the initiator identity of N-formylmethionyl-tRNA by promoting its recognition by IF2 and preventing the misappropriation of this tRNA by the elongation apparatus. The chain is Methionyl-tRNA formyltransferase from Shigella flexneri serotype 5b (strain 8401).